We begin with the raw amino-acid sequence, 238 residues long: Ribonuclease PH (238 aa).

Residues Arg86 and 124-126 contribute to the phosphate site; that span reads GTR.

It belongs to the RNase PH family. Homohexameric ring arranged as a trimer of dimers.

It carries out the reaction tRNA(n+1) + phosphate = tRNA(n) + a ribonucleoside 5'-diphosphate. Its function is as follows. Phosphorolytic 3'-5' exoribonuclease that plays an important role in tRNA 3'-end maturation. Removes nucleotide residues following the 3'-CCA terminus of tRNAs; can also add nucleotides to the ends of RNA molecules by using nucleoside diphosphates as substrates, but this may not be physiologically important. Probably plays a role in initiation of 16S rRNA degradation (leading to ribosome degradation) during starvation. In Psychrobacter arcticus (strain DSM 17307 / VKM B-2377 / 273-4), this protein is Ribonuclease PH.